Here is a 354-residue protein sequence, read N- to C-terminus: DNA repair protein rhp57 (354 aa).

100 to 107 (GESGSGKS) lines the ATP pocket.

Belongs to the RecA family.

It localises to the nucleus. In terms of biological role, involved in recombination DNA repair and in the repair of gamma-ray-induced damage. The chain is DNA repair protein rhp57 (rhp57) from Schizosaccharomyces pombe (strain 972 / ATCC 24843) (Fission yeast).